The following is a 151-amino-acid chain: Alpha-latroinsectotoxin-Lh1a (151 aa).

8 ANK repeats span residues Thr-21–Ala-37, Ile-41–Ile-52, Val-56–Asp-80, Asn-84–Leu-104, Lys-105–Lys-116, Gln-117–Lys-125, Thr-126–Lys-146, and Tyr-147–Arg-151.

This sequence belongs to the cationic peptide 01 (latrotoxin) family. 02 (alpha-latroinsectotoxin) subfamily. Homotetramer in membranes. Expressed by the venom gland.

Its subcellular location is the secreted. The protein resides in the target cell membrane. Insecticidal presynaptic neurotoxin that induces massive neurotransmitter release at insect (but not vertebrate) neuromuscular junctions. Native toxin forms cation-permeable pores (with high permeability to calcium) in lipid membranes locust muscle membrane and artificial lipid bilayers. May bind to insect neurexin-1 homolog, insect adhesion G protein-coupled receptor L1 homolog, and insect receptor-type tyrosine-protein phosphatase S homolog, and induces neurotransmitter exocytosis both by forming tetrameric pores in membranes and signaling via G protein-coupled receptor. Oligomerization is a process independent of divalent cations. The toxin forms channels with 0.55-0.58 nm entrance diameter and a relatively small conductance in planar phospholipid membranes. The protein is Alpha-latroinsectotoxin-Lh1a of Latrodectus hasselti (Redback spider).